The chain runs to 294 residues: Survival motor neuron protein (294 aa).

Gly residues predominate over residues 1–12 (MAMSSGGSGGGV). The tract at residues 1–32 (MAMSSGGSGGGVPEQEDSVLFRRGTGQSDDSD) is disordered. The residue at position 2 (alanine 2) is an N-acetylalanine. Serine 4, serine 5, and serine 8 each carry phosphoserine; by PKA. Residue threonine 25 is modified to Phosphothreonine. The interval 26-51 (GQSDDSDIWDDTALIKAYDKAVASFK) is interacts with GEMIN2. A phosphoserine mark is found at serine 28 and serine 31. Lysine 51 participates in a covalent cross-link: Glycyl lysine isopeptide (Lys-Gly) (interchain with G-Cter in SUMO2). Positions 59 to 88 (ICETSGKPKTTPKRKPAKKNKSQKKNTAAS) are disordered. Residues 68 to 82 (TTPKRKPAKKNKSQK) are compositionally biased toward basic residues. The residue at position 69 (threonine 69) is a Phosphothreonine. Threonine 85 carries the phosphothreonine; by PKA modification. The Tudor domain maps to 91 to 151 (QWKVGDKCSA…LSPICEVANN (61 aa)). The segment at 97–209 (KCSAIWSEDG…MPGPRLGPGK (113 aa)) is required for interaction with RPP20/POP7. Low complexity predominate over residues 156-166 (AQENENESQVS). Residues 156–222 (AQENENESQV…KFNGPPPPPP (67 aa)) are disordered. Serine 187 carries the post-translational modification Phosphoserine; by PKA. The segment covering 194 to 204 (LPPPPPMPGPR) has biased composition (pro residues). A compositionally biased stretch (low complexity) spans 206–215 (GPGKPGLKFN). Residue lysine 209 forms a Glycyl lysine isopeptide (Lys-Gly) (interchain with G-Cter in SUMO2) linkage. The segment at 240-267 (PPIIPPPPPICPDSLDDADALGSMLISW) is P2 (binding site for SNRPB). Residues 252–280 (DSLDDADALGSMLISWYMSGYHTGYYMGF) form an involved in homooligomerization region. The segment at 279-294 (GFRQNQKEGRCSHSLN) is required for interaction with SYNCRIP.

The protein belongs to the SMN family. In terms of assembly, homooligomer; may form higher order homooligomers in the dimer to octamer range. Part of the core SMN complex that contains SMN1, GEMIN2/SIP1, DDX20/GEMIN3, GEMIN4, GEMIN5, GEMIN6, GEMIN7, GEMIN8 and STRAP/UNRIP. Part of the SMN-Sm complex that contains SMN1, GEMIN2/SIP1, DDX20/GEMIN3, GEMIN4, GEMIN5, GEMIN6, GEMIN7, GEMIN8, STRAP/UNRIP and the Sm proteins SNRPB, SNRPD1, SNRPD2, SNRPD3, SNRPE, SNRPF and SNRPG. Component of an import snRNP complex composed of KPNB1, RNUT1, SMN1 and ZNF259. Interacts with DDX20, FBL, NOLA1, RNUT1, SYNCRIP and with several spliceosomal snRNP core Sm proteins, including SNRPB, SNRPD1, SNRPD2, SNRPD3, SNRPE and ILF3. Interacts with GEMIN2; the interaction is direct. Interacts with GEMIN3; the interaction is direct. Interacts with GEMIN8; the interaction is direct. Interacts with SNRPB; the interaction is direct. Interacts (via Tudor domain) with SNRPD1 (via C-terminus); the interaction is direct. Interacts with SNRPD2; the interaction is direct. Interacts (via Tudor domain) with SNRPD3 (via C-terminus); the interaction is direct. Interacts with SNRPE; the interaction is direct. Interacts with OSTF1, LSM10, LSM11 and RPP20/POP7. Interacts (via C-terminal region) with ZPR1 (via C-terminal region). Interacts (via Tudor domain) with COIL. Interacts with SETX; recruits SETX to POLR2A. Interacts with POLR2A (via the C-terminal domain (CTD)). Interacts with PRMT5. Interacts with XRN2. Interacts (via C-terminus) with FMR1 (via C-terminus); the interaction is direct and occurs in a RNA-independent manner. Interacts (via Tudor domain) with SF3B2 ('Arg-508'-methylated form). Interacts with WRAP53/TCAB1. Interacts (via Tudor domain) with ELAVL4 in an RNA-independent manner; the interaction is required for localization of ELAVL4 to RNA granules. Interacts with FRG1. As to quaternary structure, does not homooligomerize. Does not interact with SNRPB. As to expression, expressed in a wide variety of tissues. Expressed at high levels in brain, kidney and liver, moderate levels in skeletal and cardiac muscle, and low levels in fibroblasts and lymphocytes. Also seen at high levels in spinal cord. Present in osteoclasts and mononuclear cells (at protein level).

The protein localises to the nucleus. Its subcellular location is the gem. The protein resides in the cajal body. It is found in the cytoplasm. It localises to the cytoplasmic granule. The protein localises to the perikaryon. Its subcellular location is the cell projection. The protein resides in the neuron projection. It is found in the axon. It localises to the myofibril. The protein localises to the sarcomere. Its subcellular location is the z line. Functionally, the SMN complex catalyzes the assembly of small nuclear ribonucleoproteins (snRNPs), the building blocks of the spliceosome, and thereby plays an important role in the splicing of cellular pre-mRNAs. Most spliceosomal snRNPs contain a common set of Sm proteins SNRPB, SNRPD1, SNRPD2, SNRPD3, SNRPE, SNRPF and SNRPG that assemble in a heptameric protein ring on the Sm site of the small nuclear RNA to form the core snRNP (Sm core). In the cytosol, the Sm proteins SNRPD1, SNRPD2, SNRPE, SNRPF and SNRPG are trapped in an inactive 6S pICln-Sm complex by the chaperone CLNS1A that controls the assembly of the core snRNP. To assemble core snRNPs, the SMN complex accepts the trapped 5Sm proteins from CLNS1A forming an intermediate. Within the SMN complex, SMN1 acts as a structural backbone and together with GEMIN2 it gathers the Sm complex subunits. Binding of snRNA inside 5Sm ultimately triggers eviction of the SMN complex, thereby allowing binding of SNRPD3 and SNRPB to complete assembly of the core snRNP. Ensures the correct splicing of U12 intron-containing genes that may be important for normal motor and proprioceptive neurons development. Also required for resolving RNA-DNA hybrids created by RNA polymerase II, that form R-loop in transcription terminal regions, an important step in proper transcription termination. May also play a role in the metabolism of small nucleolar ribonucleoprotein (snoRNPs). The sequence is that of Survival motor neuron protein (SMN1) from Homo sapiens (Human).